We begin with the raw amino-acid sequence, 430 residues long: Adenylosuccinate synthetase (430 aa).

GTP is bound by residues G12 to K18 and G40 to T42. D13 serves as the catalytic Proton acceptor. Mg(2+)-binding residues include D13 and G40. IMP-binding positions include D13–K16, N38–H41, T128, R142, Q223, T238, and R302. The active-site Proton donor is the H41. T298–R304 serves as a coordination point for substrate. Residues R304, C330–D332, and S412–G414 contribute to the GTP site.

This sequence belongs to the adenylosuccinate synthetase family. Homodimer. Requires Mg(2+) as cofactor.

Its subcellular location is the cytoplasm. It catalyses the reaction IMP + L-aspartate + GTP = N(6)-(1,2-dicarboxyethyl)-AMP + GDP + phosphate + 2 H(+). The protein operates within purine metabolism; AMP biosynthesis via de novo pathway; AMP from IMP: step 1/2. In terms of biological role, plays an important role in the de novo pathway of purine nucleotide biosynthesis. Catalyzes the first committed step in the biosynthesis of AMP from IMP. The polypeptide is Adenylosuccinate synthetase (Streptococcus thermophilus (strain CNRZ 1066)).